Here is a 346-residue protein sequence, read N- to C-terminus: Cobalt transport protein CbiM (346 aa).

The signal sequence occupies residues 1–25; it reads MKRITLYAAGSAIIGAMLLAGPAHA. 8 helical membrane passes run 31 to 51, 68 to 88, 101 to 121, 133 to 153, 159 to 179, 196 to 216, 255 to 275, and 312 to 332; these read GILP…FLAL, PLVG…IPVP, IAAI…ALLI, TLGA…WFVF, LGAG…WATY, FYPL…PLGV, ATVV…AGPS, and LLLF…GYFW.

This sequence belongs to the CbiM family. Forms an energy-coupling factor (ECF) transporter complex composed of an ATP-binding protein (A component, CbiO), a transmembrane protein (T component, CbiQ) and 2 possible substrate-capture proteins (S components, CbiM and CbiN) of unknown stoichimetry.

Its subcellular location is the cell inner membrane. The protein operates within cofactor biosynthesis; adenosylcobalamin biosynthesis. Its function is as follows. Part of the energy-coupling factor (ECF) transporter complex CbiMNOQ involved in cobalt import. This is Cobalt transport protein CbiM from Geobacter sulfurreducens (strain ATCC 51573 / DSM 12127 / PCA).